Reading from the N-terminus, the 554-residue chain is Hydroxylamine reductase (554 aa).

[2Fe-2S] cluster-binding residues include Cys3, Cys6, Cys18, and Cys25. Hybrid [4Fe-2O-2S] cluster-binding residues include His252, Glu276, Cys320, Cys408, Cys436, Cys461, Glu495, and Lys497. Cys408 carries the post-translational modification Cysteine persulfide.

It belongs to the HCP family. It depends on [2Fe-2S] cluster as a cofactor. Requires hybrid [4Fe-2O-2S] cluster as cofactor.

The protein resides in the cytoplasm. It catalyses the reaction A + NH4(+) + H2O = hydroxylamine + AH2 + H(+). In terms of biological role, catalyzes the reduction of hydroxylamine to form NH(3) and H(2)O. In Shewanella sp. (strain MR-4), this protein is Hydroxylamine reductase.